Consider the following 158-residue polypeptide: Cysteine and tyrosine-rich protein 1 (158 aa).

An N-terminal signal peptide occupies residues 1 to 31 (MENPRSASLQKSWKFVRESLLLCLIAGRGEA). The Extracellular portion of the chain corresponds to 32–62 (QCDGCIEYCCDGVPPFCCSYYAYVGDVLSGT). The chain crosses the membrane as a helical span at residues 63–83 (AISGIVFGVVFLMGAVAAVFL). The Cytoplasmic portion of the chain corresponds to 84-158 (CVCMCVKNSR…PPPYPGFSRK (75 aa)). A disordered region spans residues 119 to 158 (PYSYDHEMFPPDLRPPPYTPTVPRSANYSPPPPYPGFSRK). Positions 147-158 (SPPPPYPGFSRK) are enriched in pro residues.

It belongs to the CYYR1 family.

The protein resides in the membrane. The polypeptide is Cysteine and tyrosine-rich protein 1 (cyyr1) (Danio rerio (Zebrafish)).